The following is a 251-amino-acid chain: Triosephosphate isomerase (251 aa).

Substrate is bound at residue 9–11; the sequence is NWK. The Electrophile role is filled by H95. Residue E167 is the Proton acceptor of the active site. Residues G173, S213, and 234–235 contribute to the substrate site; that span reads GG.

The protein belongs to the triosephosphate isomerase family. Homodimer.

Its subcellular location is the cytoplasm. It catalyses the reaction D-glyceraldehyde 3-phosphate = dihydroxyacetone phosphate. Its pathway is carbohydrate biosynthesis; gluconeogenesis. The protein operates within carbohydrate degradation; glycolysis; D-glyceraldehyde 3-phosphate from glycerone phosphate: step 1/1. In terms of biological role, involved in the gluconeogenesis. Catalyzes stereospecifically the conversion of dihydroxyacetone phosphate (DHAP) to D-glyceraldehyde-3-phosphate (G3P). This is Triosephosphate isomerase from Ligilactobacillus salivarius (strain UCC118) (Lactobacillus salivarius).